Consider the following 189-residue polypeptide: Thymidine kinase (189 aa).

ATP-binding positions include 9-16 (GTMNSGKT) and 85-88 (DESQ). Glutamate 86 functions as the Proton acceptor in the catalytic mechanism. 4 residues coordinate Zn(2+): cysteine 143, cysteine 146, cysteine 180, and histidine 183.

It belongs to the thymidine kinase family. Homotetramer.

It localises to the cytoplasm. The catalysed reaction is thymidine + ATP = dTMP + ADP + H(+). This Streptococcus pyogenes serotype M1 protein is Thymidine kinase.